Consider the following 440-residue polypeptide: Thymidine phosphorylase (440 aa).

The protein belongs to the thymidine/pyrimidine-nucleoside phosphorylase family. In terms of assembly, homodimer.

It carries out the reaction thymidine + phosphate = 2-deoxy-alpha-D-ribose 1-phosphate + thymine. It participates in pyrimidine metabolism; dTMP biosynthesis via salvage pathway; dTMP from thymine: step 1/2. Its function is as follows. The enzymes which catalyze the reversible phosphorolysis of pyrimidine nucleosides are involved in the degradation of these compounds and in their utilization as carbon and energy sources, or in the rescue of pyrimidine bases for nucleotide synthesis. This chain is Thymidine phosphorylase, found in Klebsiella pneumoniae (strain 342).